The primary structure comprises 189 residues: Ornithine decarboxylase antizyme 2 (189 aa).

Phosphoserine is present on serine 186.

It belongs to the ODC antizyme family. In terms of assembly, interacts with ODC1 and thereby sterically blocks ODC homodimerization. Interacts with AZIN2; this interaction disrupts the interaction between the antizyme and ODC1.

Its subcellular location is the nucleus. Its function is as follows. Ornithine decarboxylase (ODC) antizyme protein that negatively regulates ODC activity and intracellular polyamine biosynthesis and uptake in response to increased intracellular polyamine levels. Binds to ODC monomers, inhibiting the assembly of the functional ODC homodimers. Does not target the ODC monomers for degradation, which allows a protein synthesis-independent restoration of ODC activity. Involved in the translocation of AZIN2 from ER-Golgi intermediate compartment (ERGIC) to the cytosol. In Homo sapiens (Human), this protein is Ornithine decarboxylase antizyme 2 (OAZ2).